The primary structure comprises 376 residues: UDP-N-acetylglucosamine--N-acetylmuramyl-(pentapeptide) pyrophosphoryl-undecaprenol N-acetylglucosamine transferase (376 aa).

UDP-N-acetyl-alpha-D-glucosamine contacts are provided by residues Thr11–Gly13, Asn117, Arg160, Ser208, and Gln310.

The protein belongs to the glycosyltransferase 28 family. MurG subfamily.

The protein resides in the cell inner membrane. The catalysed reaction is di-trans,octa-cis-undecaprenyl diphospho-N-acetyl-alpha-D-muramoyl-L-alanyl-D-glutamyl-meso-2,6-diaminopimeloyl-D-alanyl-D-alanine + UDP-N-acetyl-alpha-D-glucosamine = di-trans,octa-cis-undecaprenyl diphospho-[N-acetyl-alpha-D-glucosaminyl-(1-&gt;4)]-N-acetyl-alpha-D-muramoyl-L-alanyl-D-glutamyl-meso-2,6-diaminopimeloyl-D-alanyl-D-alanine + UDP + H(+). The protein operates within cell wall biogenesis; peptidoglycan biosynthesis. Its function is as follows. Cell wall formation. Catalyzes the transfer of a GlcNAc subunit on undecaprenyl-pyrophosphoryl-MurNAc-pentapeptide (lipid intermediate I) to form undecaprenyl-pyrophosphoryl-MurNAc-(pentapeptide)GlcNAc (lipid intermediate II). The sequence is that of UDP-N-acetylglucosamine--N-acetylmuramyl-(pentapeptide) pyrophosphoryl-undecaprenol N-acetylglucosamine transferase from Rickettsia massiliae (strain Mtu5).